We begin with the raw amino-acid sequence, 1169 residues long: Chromosome partition protein Smc (1169 aa).

32–39 lines the ATP pocket; it reads PNGCGKSN. Coiled coils occupy residues 170-507 and 659-1030; these read ISKY…ALGE and REQQ…FQSL.

It belongs to the SMC family. Homodimer.

The protein resides in the cytoplasm. Its function is as follows. Required for chromosome condensation and partitioning. The protein is Chromosome partition protein Smc of Coxiella burnetii (strain RSA 493 / Nine Mile phase I).